The primary structure comprises 254 residues: 4-hydroxy-tetrahydrodipicolinate reductase (254 aa).

NAD(+) is bound by residues 8–13 (GCSGKM), Asp-35, 86–88 (CST), and 110–113 (SANM). Catalysis depends on His-143, which acts as the Proton donor/acceptor. Position 144 (His-144) interacts with (S)-2,3,4,5-tetrahydrodipicolinate. The Proton donor role is filled by Lys-147. 153-154 (GT) is a binding site for (S)-2,3,4,5-tetrahydrodipicolinate.

It belongs to the DapB family.

It localises to the cytoplasm. It catalyses the reaction (S)-2,3,4,5-tetrahydrodipicolinate + NAD(+) + H2O = (2S,4S)-4-hydroxy-2,3,4,5-tetrahydrodipicolinate + NADH + H(+). The enzyme catalyses (S)-2,3,4,5-tetrahydrodipicolinate + NADP(+) + H2O = (2S,4S)-4-hydroxy-2,3,4,5-tetrahydrodipicolinate + NADPH + H(+). It functions in the pathway amino-acid biosynthesis; L-lysine biosynthesis via DAP pathway; (S)-tetrahydrodipicolinate from L-aspartate: step 4/4. Catalyzes the conversion of 4-hydroxy-tetrahydrodipicolinate (HTPA) to tetrahydrodipicolinate. This chain is 4-hydroxy-tetrahydrodipicolinate reductase, found in Clostridium perfringens (strain ATCC 13124 / DSM 756 / JCM 1290 / NCIMB 6125 / NCTC 8237 / Type A).